The following is an 893-amino-acid chain: MQTAEIRRRWLDFFERKEHTVVPSASLVSSDPSLMFTVAGMVPFIPYLTAQVPAPYKRATSVQKCLRTLDIDEVGKTTRHGTFFQMNGNFSFGDYFKREAVAFAWELLTTPEADGGLGFDPERLWTTVYLDDDEAFQLWREVGMPAERIQRRGKADNYWNTGQPGPGGPCSEIYFDRGPAYGAEGGPEADEDRYIEIWNLVFMQYQLSAVRTKVDFDVEGELPAKNIDTGMGLERVAFLKQGVDNMYEIDEVRPVLDKAAELSGRRYGAVHEDDVRMRVVADHVRSALMLIGDGVTPGNEGAGYVLRRLVRRAVRAMRLLGVEEPALPHLLPASMEVMSASYPQLRSDFERISAVAYAEEDAFRRTLVSGTAIFETAVAQTKAAGGSSLSGERAFALHDTYGFPIDLTLEMAAEAGVGVDEPGFRALMAEQVGRAKADAKAKKTGGVDLAIYRSTLEQLPAPVVFTGYEAAAGEARISVVLQGGVSTPSAPAGTDVEVVLDRTPFYAEGGGQLADHGTVTTTSGAVLAVSDVQQPVRGLYVHKGTVTSGELVAGDAVHAVVDAGRRRSISRAHTATHLVHQVVREHLGDTATQAGSQNAPGRMRFDYRSTAQVAGDVVRDIEAVVNERIHDDLEVSAAVMDRESALNSGAMALFGEKYGEKVRVVSIGEDWSKELCGGTHTLTSQQVGLVSIVSESSIGSGARRIEALVGADAFDFLTREHLLVNQLTEVVKARPEELPDRIGALLTRLGDAEKEIARLRGGQVLALAPTIAAKPVDKFGVRVVTHDAGPVSADDLRTLVLDVRSRLGEERPSVVAVAGVAKDRPVVVVATNAEARRWGVKAGELVRTAAKTLGGGGGGKDDLAQGGGQDPSKVPAALQGIEDFVGARVTGSV.

The Zn(2+) site is built by histidine 573, histidine 577, cysteine 676, and histidine 680. The interval leucine 853–serine 872 is disordered.

It belongs to the class-II aminoacyl-tRNA synthetase family. Requires Zn(2+) as cofactor.

It is found in the cytoplasm. The catalysed reaction is tRNA(Ala) + L-alanine + ATP = L-alanyl-tRNA(Ala) + AMP + diphosphate. Functionally, catalyzes the attachment of alanine to tRNA(Ala) in a two-step reaction: alanine is first activated by ATP to form Ala-AMP and then transferred to the acceptor end of tRNA(Ala). Also edits incorrectly charged Ser-tRNA(Ala) and Gly-tRNA(Ala) via its editing domain. This is Alanine--tRNA ligase from Kineococcus radiotolerans (strain ATCC BAA-149 / DSM 14245 / SRS30216).